The following is a 310-amino-acid chain: HTH-type transcriptional activator TtdR (310 aa).

Residues 6–63 enclose the HTH lysR-type domain; the sequence is PLAKDLQVLVEIVHSGSFSAAAATLGQTPAFVTKRIQILENTLATTLLNRSARGVALT. The H-T-H motif DNA-binding region spans 23 to 42; sequence FSAAAATLGQTPAFVTKRIQ.

It belongs to the LysR transcriptional regulatory family.

In terms of biological role, positive regulator required for L-tartrate-dependent anaerobic growth on glycerol. Induces expression of the ttdA-ttdB-ygjE operon. In Escherichia coli O6:H1 (strain CFT073 / ATCC 700928 / UPEC), this protein is HTH-type transcriptional activator TtdR (ttdR).